Consider the following 1992-residue polypeptide: Otoferlin (1992 aa).

C2 domains lie at 1–98 (MALV…EVSD), 241–362 (KRSK…HKWA), and 405–536 (IEGN…FLPT). Over 1-1958 (MALVVHLKTV…IRYFIWHNYR (1958 aa)) the chain is Cytoplasmic. The interval 655–699 (PALAKKKKEGGGESEEEESELIHNSSEEEAEDDGDLTSVPSTPPM) is disordered. 2 C2 domains span residues 952–1077 (IQAV…PPRF) and 1124–1250 (RGPI…NNWA). Residues Asp984, Asp990, Asp1046, and Asp1048 each coordinate Ca(2+). The stretch at 1282–1363 (VKVDLNEDEK…ESAEIKADDF (82 aa)) forms a coiled coil. Disordered regions lie at residues 1288-1311 (EDEK…EEEP) and 1354-1399 (ESAE…KPKV). The span at 1356–1399 (AEIKADDFPMKGTKPKEKSKDKKSTKDKKKNNDGTEKRPPKPKV) shows a compositional bias: basic and acidic residues. C2 domains are found at residues 1470 to 1588 (DPNM…ATCG) and 1711 to 1860 (PAPG…KQCS). Ca(2+) contacts are provided by Asp1503, Asp1509, Asp1558, Asp1560, Asp1566, Asp1831, Ser1834, and Asp1837. The chain crosses the membrane as a helical span at residues 1959–1979 (WLILKALALLLLLLLVGLFLY). Residues 1980-1992 (SIPGYLVKKLLGA) are Extracellular-facing.

The protein belongs to the ferlin family. It depends on Ca(2+) as a cofactor.

Its subcellular location is the cytoplasmic vesicle. It is found in the secretory vesicle. The protein resides in the synaptic vesicle membrane. The protein localises to the basolateral cell membrane. It localises to the endoplasmic reticulum membrane. Its subcellular location is the golgi apparatus membrane. It is found in the presynaptic cell membrane. The protein resides in the cell membrane. In terms of biological role, key calcium ion sensor involved in the Ca(2+)-triggered synaptic vesicle-plasma membrane fusion and in the control of neurotransmitter release at these output synapses. In Danio rerio (Zebrafish), this protein is Otoferlin (otof).